A 442-amino-acid chain; its full sequence is F-box/FBD/LRR-repeat protein At2g26030 (442 aa).

The F-box domain occupies 3 to 49 (CDRICELPDSLLTQVLSYLPTIDSVKTSVLSKRWEFLWLRVPVLDLK). LRR repeat units lie at residues 128 to 160 (CNTL…HLED), 162 to 187 (WYYD…VLIR), 188 to 214 (PIDF…RLTF), 234 to 260 (YLNF…DIDS), 278 to 309 (KRDI…DRYS), and 324 to 352 (QAAV…ILDF). Residues 358–410 (PEQDGLTYVPQCLLSSLECVEIRELIMGEETGEKLVRYFLKNSVVLKKLILRL) enclose the FBD domain.

The chain is F-box/FBD/LRR-repeat protein At2g26030 from Arabidopsis thaliana (Mouse-ear cress).